The sequence spans 448 residues: N-succinylarginine dihydrolase (448 aa).

Residues 19-28 (GGLSYGNVAS), Asn110, and 137-138 (HR) each bind substrate. The active site involves Glu174. Arg214 contacts substrate. His250 is a catalytic residue. Asp252 and Asn365 together coordinate substrate. Cys371 acts as the Nucleophile in catalysis.

It belongs to the succinylarginine dihydrolase family. In terms of assembly, homodimer.

It carries out the reaction N(2)-succinyl-L-arginine + 2 H2O + 2 H(+) = N(2)-succinyl-L-ornithine + 2 NH4(+) + CO2. It functions in the pathway amino-acid degradation; L-arginine degradation via AST pathway; L-glutamate and succinate from L-arginine: step 2/5. Catalyzes the hydrolysis of N(2)-succinylarginine into N(2)-succinylornithine, ammonia and CO(2). In Pseudomonas syringae pv. syringae (strain B728a), this protein is N-succinylarginine dihydrolase.